The following is a 571-amino-acid chain: Putative fatty-acid--CoA ligase fadD11 (571 aa).

Residues 1-19 (MARLRGAGAAGRCRPGRFG) are compositionally biased toward low complexity. Disordered regions lie at residues 1 to 35 (MARL…EPDR) and 67 to 91 (RQRG…RCAH). Positions 78–91 (ATVRRSRSRQRCAH) are enriched in basic residues. Transmembrane regions (helical) follow at residues 314 to 334 (TLAF…MSEL) and 431 to 451 (ANIE…MAIG).

It belongs to the ATP-dependent AMP-binding enzyme family.

Its subcellular location is the cell membrane. This Mycobacterium tuberculosis (strain CDC 1551 / Oshkosh) protein is Putative fatty-acid--CoA ligase fadD11 (fadD11).